A 294-amino-acid polypeptide reads, in one-letter code: Putative ribose uptake protein RbsU (294 aa).

10 helical membrane passes run 5–24, 34–56, 61–80, 90–112, 121–138, 153–170, 182–204, 214–236, 243–265, and 275–292; these read ALLI…TIAS, ILGS…GIAF, NLWF…IVTF, RAMP…FALG, VLGG…WLTV, QAVI…AYSA, AFVP…LASR, VSYT…LISA, LATG…IWFL, and WVTI…AVTV.

Belongs to the GRP transporter (TC 2.A.7.5) family.

It is found in the cell membrane. In terms of biological role, could be involved in the uptake of ribose. The protein is Putative ribose uptake protein RbsU (rbsU) of Lactiplantibacillus plantarum (strain ATCC BAA-793 / NCIMB 8826 / WCFS1) (Lactobacillus plantarum).